Consider the following 887-residue polypeptide: ATP-dependent DNA helicase srs2 (887 aa).

Residues 9–304 (KFLNEEQRIS…LHLERNYRSA (296 aa)) enclose the UvrD-like helicase ATP-binding domain. ATP contacts are provided by residues 33–38 (GSGKTR) and arginine 302. Residues 305 to 597 (KPILELALSI…TISTLHAAKG (293 aa)) enclose the UvrD-like helicase C-terminal domain.

Belongs to the helicase family. UvrD subfamily.

It is found in the nucleus. It catalyses the reaction Couples ATP hydrolysis with the unwinding of duplex DNA by translocating in the 3'-5' direction.. The catalysed reaction is ATP + H2O = ADP + phosphate + H(+). In terms of biological role, ATP-dependent DNA helicase involved in DNA repair at least for UV-induced lesions. Also aids the recombinational repair of camptothecin-induced collapsed replication forks. The sequence is that of ATP-dependent DNA helicase srs2 (srs2) from Schizosaccharomyces pombe (strain 972 / ATCC 24843) (Fission yeast).